The following is a 619-amino-acid chain: ATP-dependent zinc metalloprotease FtsH (619 aa).

Residues 1 to 5 (MKYFK) are Cytoplasmic-facing. A helical transmembrane segment spans residues 6–26 (GISFYIIIFILILVIITFFTA). At 27–110 (TDNPPKMSYS…VTQPPQPPWW (84 aa)) the chain is on the extracellular side. A helical transmembrane segment spans residues 111 to 131 (VSMLPTVGLVIILILIWFFFI). Residues 132–619 (QQSQGGGGGN…GSSQTPQLEG (488 aa)) are Cytoplasmic-facing. 204-211 (GPPGTGKT) lines the ATP pocket. His426 is a Zn(2+) binding site. Glu427 is an active-site residue. Positions 430 and 502 each coordinate Zn(2+).

In the central section; belongs to the AAA ATPase family. It in the C-terminal section; belongs to the peptidase M41 family. As to quaternary structure, homohexamer. Zn(2+) is required as a cofactor.

Its subcellular location is the cell membrane. Its function is as follows. Acts as a processive, ATP-dependent zinc metallopeptidase for both cytoplasmic and membrane proteins. Plays a role in the quality control of integral membrane proteins. This Ruminiclostridium cellulolyticum (strain ATCC 35319 / DSM 5812 / JCM 6584 / H10) (Clostridium cellulolyticum) protein is ATP-dependent zinc metalloprotease FtsH.